The primary structure comprises 231 residues: Adenosylcobinamide-GDP ribazoletransferase (231 aa).

Transmembrane regions (helical) follow at residues 28–48 (LWLFPYAAILIALIVSVPHFI), 97–117 (TGAGGVAVVVVYFLLLYTLLY), 121–141 (FWEIALSQVLAKYSMLLLMLL), 162–182 (VFIGAVPVVLLCYKVGIESLA), and 209–229 (VIGSANCLTFAASLSALTIAG).

This sequence belongs to the CobS family. It depends on Mg(2+) as a cofactor.

The protein localises to the cell membrane. The enzyme catalyses alpha-ribazole + adenosylcob(III)inamide-GDP = adenosylcob(III)alamin + GMP + H(+). It carries out the reaction alpha-ribazole 5'-phosphate + adenosylcob(III)inamide-GDP = adenosylcob(III)alamin 5'-phosphate + GMP + H(+). Its pathway is cofactor biosynthesis; adenosylcobalamin biosynthesis; adenosylcobalamin from cob(II)yrinate a,c-diamide: step 7/7. In terms of biological role, joins adenosylcobinamide-GDP and alpha-ribazole to generate adenosylcobalamin (Ado-cobalamin). Also synthesizes adenosylcobalamin 5'-phosphate from adenosylcobinamide-GDP and alpha-ribazole 5'-phosphate. The sequence is that of Adenosylcobinamide-GDP ribazoletransferase (cobS2) from Archaeoglobus fulgidus (strain ATCC 49558 / DSM 4304 / JCM 9628 / NBRC 100126 / VC-16).